Consider the following 243-residue polypeptide: 1-(5-phosphoribosyl)-5-[(5-phosphoribosylamino)methylideneamino] imidazole-4-carboxamide isomerase (243 aa).

Aspartate 8 serves as the catalytic Proton acceptor. Aspartate 130 serves as the catalytic Proton donor.

It belongs to the HisA/HisF family.

It localises to the cytoplasm. It catalyses the reaction 1-(5-phospho-beta-D-ribosyl)-5-[(5-phospho-beta-D-ribosylamino)methylideneamino]imidazole-4-carboxamide = 5-[(5-phospho-1-deoxy-D-ribulos-1-ylimino)methylamino]-1-(5-phospho-beta-D-ribosyl)imidazole-4-carboxamide. It functions in the pathway amino-acid biosynthesis; L-histidine biosynthesis; L-histidine from 5-phospho-alpha-D-ribose 1-diphosphate: step 4/9. This Methylococcus capsulatus (strain ATCC 33009 / NCIMB 11132 / Bath) protein is 1-(5-phosphoribosyl)-5-[(5-phosphoribosylamino)methylideneamino] imidazole-4-carboxamide isomerase.